The primary structure comprises 72 residues: Translation initiation factor IF-1 (72 aa).

The region spanning 1–72 is the S1-like domain; that stretch reads MSKDDVIQMQ…SRARIVFRAK (72 aa).

This sequence belongs to the IF-1 family. As to quaternary structure, component of the 30S ribosomal translation pre-initiation complex which assembles on the 30S ribosome in the order IF-2 and IF-3, IF-1 and N-formylmethionyl-tRNA(fMet); mRNA recruitment can occur at any time during PIC assembly.

The protein resides in the cytoplasm. Functionally, one of the essential components for the initiation of protein synthesis. Stabilizes the binding of IF-2 and IF-3 on the 30S subunit to which N-formylmethionyl-tRNA(fMet) subsequently binds. Helps modulate mRNA selection, yielding the 30S pre-initiation complex (PIC). Upon addition of the 50S ribosomal subunit IF-1, IF-2 and IF-3 are released leaving the mature 70S translation initiation complex. The chain is Translation initiation factor IF-1 from Albidiferax ferrireducens (strain ATCC BAA-621 / DSM 15236 / T118) (Rhodoferax ferrireducens).